Consider the following 68-residue polypeptide: Large ribosomal subunit protein bL31 (68 aa).

Zn(2+) is bound by residues Cys16, Cys18, Cys37, and Cys40.

The protein belongs to the bacterial ribosomal protein bL31 family. Type A subfamily. As to quaternary structure, part of the 50S ribosomal subunit. Zn(2+) is required as a cofactor.

In terms of biological role, binds the 23S rRNA. This Nitrosococcus oceani (strain ATCC 19707 / BCRC 17464 / JCM 30415 / NCIMB 11848 / C-107) protein is Large ribosomal subunit protein bL31.